Reading from the N-terminus, the 426-residue chain is 3-phosphoshikimate 1-carboxyvinyltransferase (426 aa).

3-phosphoshikimate contacts are provided by K22, S23, and R27. K22 contacts phosphoenolpyruvate. Positions 96 and 124 each coordinate phosphoenolpyruvate. 3-phosphoshikimate is bound by residues S170, S171, Q172, S198, D314, N337, and K341. Q172 provides a ligand contact to phosphoenolpyruvate. D314 (proton acceptor) is an active-site residue. Phosphoenolpyruvate contacts are provided by R345, R387, and K412.

This sequence belongs to the EPSP synthase family. As to quaternary structure, monomer.

It is found in the cytoplasm. The enzyme catalyses 3-phosphoshikimate + phosphoenolpyruvate = 5-O-(1-carboxyvinyl)-3-phosphoshikimate + phosphate. The protein operates within metabolic intermediate biosynthesis; chorismate biosynthesis; chorismate from D-erythrose 4-phosphate and phosphoenolpyruvate: step 6/7. Functionally, catalyzes the transfer of the enolpyruvyl moiety of phosphoenolpyruvate (PEP) to the 5-hydroxyl of shikimate-3-phosphate (S3P) to produce enolpyruvyl shikimate-3-phosphate and inorganic phosphate. In Shewanella piezotolerans (strain WP3 / JCM 13877), this protein is 3-phosphoshikimate 1-carboxyvinyltransferase.